Reading from the N-terminus, the 365-residue chain is Membrane-bound lytic murein transglycosylase C (365 aa).

Positions 1 to 19 are cleaved as a signal peptide; it reads MKKYTKYLPLLLIIPFLAA. A lipid anchor (N-palmitoyl cysteine) is attached at C20. C20 carries S-diacylglycerol cysteine lipidation.

This sequence belongs to the transglycosylase Slt family.

The protein localises to the cell outer membrane. The enzyme catalyses Exolytic cleavage of the (1-&gt;4)-beta-glycosidic linkage between N-acetylmuramic acid (MurNAc) and N-acetylglucosamine (GlcNAc) residues in peptidoglycan, from either the reducing or the non-reducing ends of the peptidoglycan chains, with concomitant formation of a 1,6-anhydrobond in the MurNAc residue.. Its function is as follows. Murein-degrading enzyme. May play a role in recycling of muropeptides during cell elongation and/or cell division. The sequence is that of Membrane-bound lytic murein transglycosylase C from Actinobacillus pleuropneumoniae serotype 5b (strain L20).